Reading from the N-terminus, the 93-residue chain is Small ribosomal subunit protein uS19m (93 aa).

The protein belongs to the universal ribosomal protein uS19 family. As to quaternary structure, component of the mitochondrial small ribosomal subunit (mt-SSU). Mature yeast 74S mitochondrial ribosomes consist of a small (37S) and a large (54S) subunit. The 37S small subunit contains a 15S ribosomal RNA (15S mt-rRNA) and at least 32 different proteins. The 54S large subunit contains a 21S rRNA (21S mt-rRNA) and at least 45 different proteins.

The protein resides in the mitochondrion. Its function is as follows. Component of the mitochondrial ribosome (mitoribosome), a dedicated translation machinery responsible for the synthesis of mitochondrial genome-encoded proteins, including at least some of the essential transmembrane subunits of the mitochondrial respiratory chain. The mitoribosomes are attached to the mitochondrial inner membrane and translation products are cotranslationally integrated into the membrane. The sequence is that of Small ribosomal subunit protein uS19m (rsm19) from Schizosaccharomyces pombe (strain 972 / ATCC 24843) (Fission yeast).